Consider the following 1269-residue polypeptide: DNA-directed RNA polymerase subunit beta'' (1269 aa).

The Zn(2+) site is built by cysteine 226, cysteine 301, cysteine 308, and cysteine 311.

Belongs to the RNA polymerase beta' chain family. RpoC2 subfamily. As to quaternary structure, in plastids the minimal PEP RNA polymerase catalytic core is composed of four subunits: alpha, beta, beta', and beta''. When a (nuclear-encoded) sigma factor is associated with the core the holoenzyme is formed, which can initiate transcription. The cofactor is Zn(2+).

Its subcellular location is the plastid. The protein localises to the chloroplast. The enzyme catalyses RNA(n) + a ribonucleoside 5'-triphosphate = RNA(n+1) + diphosphate. DNA-dependent RNA polymerase catalyzes the transcription of DNA into RNA using the four ribonucleoside triphosphates as substrates. The sequence is that of DNA-directed RNA polymerase subunit beta'' from Cyanidium caldarium (Red alga).